The primary structure comprises 440 residues: Glutamyl-tRNA reductase (440 aa).

Substrate is bound by residues 50-53 (TCNR), Ser109, 114-116 (EPQ), and Gln120. Cys51 acts as the Nucleophile in catalysis. 189-194 (GAGEMA) contacts NADP(+).

The protein belongs to the glutamyl-tRNA reductase family. In terms of assembly, homodimer.

The enzyme catalyses (S)-4-amino-5-oxopentanoate + tRNA(Glu) + NADP(+) = L-glutamyl-tRNA(Glu) + NADPH + H(+). The protein operates within porphyrin-containing compound metabolism; protoporphyrin-IX biosynthesis; 5-aminolevulinate from L-glutamyl-tRNA(Glu): step 1/2. Catalyzes the NADPH-dependent reduction of glutamyl-tRNA(Glu) to glutamate 1-semialdehyde (GSA). The sequence is that of Glutamyl-tRNA reductase from Nitratidesulfovibrio vulgaris (strain DP4) (Desulfovibrio vulgaris).